A 1010-amino-acid chain; its full sequence is Plasma membrane ATPase 2 (1010 aa).

A compositionally biased stretch (basic and acidic residues) spans 1-14 (MQRNNGEGRPEGMH). Disordered stretches follow at residues 1–126 (MQRN…EDED) and 139–165 (QDQE…PEEL). At 1–201 (MQRNNGEGRP…KEEKTNNIKK (201 aa)) the chain is on the cytoplasmic side. Positions 25–34 (FKNNASPQDD) are enriched in polar residues. The span at 42 to 52 (YEEGGVEDSAV) shows a compositional bias: acidic residues. Over residues 68-106 (APNTHAQQANLQSGNTSITHETQSTSRGQEATTSPSLSA) the composition is skewed to polar residues. Acidic residues predominate over residues 140–151 (DQEEEQVEEEES). A helical transmembrane segment spans residues 202 to 222 (FLSFFVGPIQFVMELAAALAA). At 223–226 (GLRD) the chain is on the extracellular side. A helical membrane pass occupies residues 227–246 (WVDFGVICALLLLNATVGFV). Over 247 to 377 (QEYQAGSIVD…SQGHFTEVLN (131 aa)) the chain is Cytoplasmic. A helical transmembrane segment spans residues 378-399 (GIGTILLVLVILTLLCIYTAAF). Residues 400–410 (YRSVRLAALLE) lie on the Extracellular side of the membrane. A helical membrane pass occupies residues 411 to 433 (YTLAITIIGVPVGLPAVVTTTMA). At 434–805 (VGAAYLAKKK…LIIRNQLLNL (372 aa)) the chain is on the cytoplasmic side. Asp-464 acts as the 4-aspartylphosphate intermediate in catalysis. Mg(2+)-binding residues include Asp-720 and Asp-724. Residues 806-824 (ELIVFIAIFADVATLAIAY) traverse the membrane as a helical segment. Residues 825–840 (DNAPYAMKPVKWNLPR) lie on the Extracellular side of the membrane. A helical membrane pass occupies residues 841 to 860 (LWGLATIVGILLAIGTWIVN). At 861-912 (TTMIAQGQNRGIVQNFGVQDEVLFLQISLTENWLIFITRCSGPFWSSFPSWQ) the chain is on the cytoplasmic side. The chain crosses the membrane as a helical span at residues 913–933 (LSGAVLVVDILATLFCIFGWF). At 934 to 946 (KGGHQTSIVAVIR) the chain is on the extracellular side. A helical membrane pass occupies residues 947-963 (IWMYSFGIFCLIAGVYY). Residues 964–1010 (ILSESSSFDRWMHGKHKERGTTRKLEDFVMQLQRTSTHHEAEGKVTS) are Cytoplasmic-facing.

The protein belongs to the cation transport ATPase (P-type) (TC 3.A.3) family. Type IIIA subfamily. In terms of processing, in addition to transient phosphorylation of the active site Asp residue, this protein, but not the product of the pma1 locus, is phosphorylated efficiently in isolated plasma membrane.

It localises to the cell membrane. It carries out the reaction ATP + H2O + H(+)(in) = ADP + phosphate + 2 H(+)(out). Functionally, the plasma membrane ATPase of plants and fungi is a hydrogen ion pump. The proton gradient it generates drives the active transport of nutrients by H(+)-symport. The resulting external acidification and/or internal alkinization may mediate growth responses. This is Plasma membrane ATPase 2 (pma2) from Schizosaccharomyces pombe (strain 972 / ATCC 24843) (Fission yeast).